A 386-amino-acid chain; its full sequence is Enoyl-[acyl-carrier-protein] reductase 2, mitochondrial (386 aa).

The transit peptide at 1–22 (MYSVLKQSIRPRLLATHNQFRT) directs the protein to the mitochondrion. The Proton donor role is filled by tyrosine 79. NADP(+) contacts are provided by residues asparagine 172, 199-202 (TSAV), 222-224 (RDR), 296-299 (YGGM), 321-323 (FWV), and lysine 381.

It belongs to the zinc-containing alcohol dehydrogenase family. Quinone oxidoreductase subfamily. Homodimer and heterodimer with ETR1.

It localises to the mitochondrion. It catalyses the reaction a 2,3-saturated acyl-[ACP] + NADP(+) = a (2E)-enoyl-[ACP] + NADPH + H(+). Its function is as follows. Required for respiration and the maintenance of the mitochondrial compartment. Oxidoreductase with a preference for short and medium chain substrates, including trans-2-hexenoyl-CoA (C6), trans-2-decenoyl-CoA (C10), and trans-2-hexadecenoyl-CoA (C16). May play a role in mitochondrial fatty acid synthesis. The sequence is that of Enoyl-[acyl-carrier-protein] reductase 2, mitochondrial (ETR2) from Candida tropicalis (Yeast).